Reading from the N-terminus, the 238-residue chain is uncharacterized protein (238 aa).

This is an uncharacterized protein from Haemophilus influenzae (strain ATCC 51907 / DSM 11121 / KW20 / Rd).